The chain runs to 443 residues: Endothelin receptor type B (443 aa).

The signal sequence occupies residues 1-26 (MQPLRSLCGRALVALIFACGVAGVQS). Over 27 to 102 (EERGFPPAGA…GPIEIKDTFK (76 aa)) the chain is Extracellular. The segment at 53–89 (TFWPRGSNASLPRSSSPPQMPKGGRMAGPPARTLTPP) is disordered. Residues 59 to 69 (SNASLPRSSSP) are compositionally biased toward polar residues. N-linked (GlcNAc...) asparagine glycosylation is present at Asn60. Residues 103 to 127 (YINTVVSCLVFVLGIIGNSTLLRII) traverse the membrane as a helical segment. Over 128 to 138 (YKNKCMRNGPN) the chain is Cytoplasmic. A helical transmembrane segment spans residues 139 to 164 (ILIASLALGDLLHIIIDIPINVYKLL). The Extracellular segment spans residues 165–176 (AEDWPFGVEMCK). Cysteines 175 and 256 form a disulfide. A helical membrane pass occupies residues 177 to 198 (LVPFIQKASVGITVLSLCALSI). Over 199–219 (DRYRAVASWSRIKGIGVPKWT) the chain is Cytoplasmic. A helical membrane pass occupies residues 220–244 (AVEIVLIWVVSVVLAVPEALGFDMI). The Extracellular segment spans residues 245 to 272 (TTDYKGNRLRICLLHPTQKTAFMQFYKT). The chain crosses the membrane as a helical span at residues 273-297 (AKDWWLFSFYFCLPLAITAFFYTLM). Residues 298–325 (TCEMLRKKSGMQIALNDHLKQRREVAKT) are Cytoplasmic-facing. Phosphoserine is present on Ser306. Residues 326 to 351 (VFCLVLVFALCWLPLHLSRILKLTLY) traverse the membrane as a helical segment. The Extracellular portion of the chain corresponds to 352–363 (DQNDSNRCELLS). A glycan (N-linked (GlcNAc...) asparagine) is linked at Asn354. A helical transmembrane segment spans residues 364–390 (FLLVLDYIGINMASLNSCINPIALYLV). Residues 391–443 (SKRFKNCFKSCLCCWCQSFEEKQSLEEKQSCLKFKANDHGYDNFRSSNKYSSS) are Cytoplasmic-facing. 3 S-palmitoyl cysteine lipidation sites follow: Cys403, Cys404, and Cys406. Residue Ser420 is modified to Phosphoserine. Residue Tyr440 is modified to Phosphotyrosine. A phosphoserine mark is found at Ser441, Ser442, and Ser443.

This sequence belongs to the G-protein coupled receptor 1 family. Endothelin receptor subfamily. EDNRB sub-subfamily.

The protein localises to the cell membrane. Its function is as follows. Non-specific receptor for endothelin 1, 2, and 3. Mediates its action by association with G proteins that activate a phosphatidylinositol-calcium second messenger system. In Sus scrofa (Pig), this protein is Endothelin receptor type B (EDNRB).